The chain runs to 217 residues: Deoxyribose-phosphate aldolase (217 aa).

Asp-95 acts as the Proton donor/acceptor in catalysis. Catalysis depends on Lys-156, which acts as the Schiff-base intermediate with acetaldehyde. Lys-184 (proton donor/acceptor) is an active-site residue.

This sequence belongs to the DeoC/FbaB aldolase family. DeoC type 1 subfamily.

The protein localises to the cytoplasm. The enzyme catalyses 2-deoxy-D-ribose 5-phosphate = D-glyceraldehyde 3-phosphate + acetaldehyde. Its pathway is carbohydrate degradation; 2-deoxy-D-ribose 1-phosphate degradation; D-glyceraldehyde 3-phosphate and acetaldehyde from 2-deoxy-alpha-D-ribose 1-phosphate: step 2/2. Its function is as follows. Catalyzes a reversible aldol reaction between acetaldehyde and D-glyceraldehyde 3-phosphate to generate 2-deoxy-D-ribose 5-phosphate. The sequence is that of Deoxyribose-phosphate aldolase from Thermosynechococcus vestitus (strain NIES-2133 / IAM M-273 / BP-1).